The sequence spans 374 residues: MQNTSFDNESDYSDDSDFASASETENRIGLTVPLELAGGRLDAVLAKLLPDYSRSRLTLWIKEGAVIVNDKPSQPKDKMIGGEQIRVTVRPSEENLAFVPEPMALDIVYEDDTVIVVNKPAGLVVHPAAGNWTGTLLNGLLAHCPELSQIPRAGIVHRLDKETSGLMVVAKTLPAQNSLVWQLQERTVKRIYRAVANGIVPFDGKIETQIGRDPHNRLKMAVVKFGGKPAVTHVKVLERYLAHSYIECSLETGRTHQIRVHMREANHPLAGDPVYGNPRHPCGDTVKEAVKSLGARQALHAYRLSFTHPESGETVSFEAPIPDDIYHLLSVLRLEAGLDSSLSNEEEWQDKFGADDDDDWNEDDYDVEVVYVRE.

A disordered region spans residues 1-20 (MQNTSFDNESDYSDDSDFAS). Residues 8 to 17 (NESDYSDDSD) show a composition bias toward acidic residues. One can recognise an S4 RNA-binding domain in the interval 39–112 (GRLDAVLAKL…MALDIVYEDD (74 aa)). Aspartate 160 is an active-site residue.

This sequence belongs to the pseudouridine synthase RluA family.

It localises to the cytoplasm. It catalyses the reaction uridine(1911/1915/1917) in 23S rRNA = pseudouridine(1911/1915/1917) in 23S rRNA. Its function is as follows. Responsible for synthesis of pseudouridine from uracil at positions 1911, 1915 and 1917 in 23S ribosomal RNA. In Neisseria meningitidis serogroup A / serotype 4A (strain DSM 15465 / Z2491), this protein is Ribosomal large subunit pseudouridine synthase D (rluD).